The sequence spans 483 residues: Malonate-semialdehyde dehydrogenase 2 (483 aa).

NAD(+) is bound by residues F152, K176, E179, R180, and S229. C284 acts as the Nucleophile in catalysis. E384 is a binding site for NAD(+).

This sequence belongs to the aldehyde dehydrogenase family. IolA subfamily. In terms of assembly, homotetramer.

It carries out the reaction 3-oxopropanoate + NAD(+) + CoA + H2O = hydrogencarbonate + acetyl-CoA + NADH + H(+). The enzyme catalyses 2-methyl-3-oxopropanoate + NAD(+) + CoA + H2O = propanoyl-CoA + hydrogencarbonate + NADH + H(+). It participates in polyol metabolism; myo-inositol degradation into acetyl-CoA; acetyl-CoA from myo-inositol: step 7/7. Its function is as follows. Catalyzes the oxidation of malonate semialdehyde (MSA) and methylmalonate semialdehyde (MMSA) into acetyl-CoA and propanoyl-CoA, respectively. Is involved in a myo-inositol catabolic pathway. Bicarbonate, and not CO2, is the end-product of the enzymatic reaction. The protein is Malonate-semialdehyde dehydrogenase 2 of Geobacillus thermodenitrificans (strain NG80-2).